A 575-amino-acid polypeptide reads, in one-letter code: MAEKGKTNSSYWSTTRNDNSTVNTYIDTPAGKTHIWLLIATTMHTILSFIIMILCIDLIIKQDTCMKTNIMTVSSMNESAKTIKETITELIRQEVISRTINIQSSVQSGIPILLNKQSRDLTQLIEKSCNRQELAQICENTIAIHHADGISPLDPHDFWRCPVGEPLLSNNPNISLLPGPSLLSGSTTISGCVRLPSLSIGDAIYAYSSNLITQGCADIGKSYQVLQLGYISLNSDMYPDLKPVISHTYDINDNRKSCSVIAAGTRGYQLCSLPTVNETTDYSSEGIEDLVFDILDLKGKTKSHRYKNEDITFDHPFSAMYPSVGSGIKIENTLIFLGYGGLTTPLQGDTKCVTNRCANVNQSVCNDALKITWLKKRQVVNVLIRINNYLSDRPKIVVETIPITQNYLGAEGRLLKLGKKIYIYTRSSGWHSHLQIGSLDINNPMTIKWAPHEVLSRPGNQDCNWYNRCPRECISGVYTDAYPLSPDAVNVATTTLYANTSRVNPTIMYSNTSEIINMLRLKNVQLEAAYTTTSCITHFGKGYCFHIVEINQTSLNTLQPMLFKTSIPKICKITS.

At 1–34 the chain is on the intravirion side; the sequence is MAEKGKTNSSYWSTTRNDNSTVNTYIDTPAGKTH. Residues 35–55 form a helical membrane-spanning segment; the sequence is IWLLIATTMHTILSFIIMILC. The Virion surface segment spans residues 56–575; the sequence is IDLIIKQDTC…SIPKICKITS (520 aa). The N-linked (GlcNAc...) asparagine; by host glycan is linked to asparagine 77. 4 cysteine pairs are disulfide-bonded: cysteine 192–cysteine 216, cysteine 258–cysteine 271, cysteine 357–cysteine 469, and cysteine 463–cysteine 473. The interval 254-259 is involved in neuraminidase activity; that stretch reads NRKSCS. N-linked (GlcNAc...) asparagine; by host glycosylation is found at asparagine 499 and asparagine 511. Cysteine 535 and cysteine 544 form a disulfide bridge.

This sequence belongs to the paramyxoviruses hemagglutinin-neuraminidase family. Homotetramer; composed of disulfide-linked homodimers. Interacts with F protein trimer.

It is found in the virion membrane. Its subcellular location is the host cell membrane. It catalyses the reaction Hydrolysis of alpha-(2-&gt;3)-, alpha-(2-&gt;6)-, alpha-(2-&gt;8)- glycosidic linkages of terminal sialic acid residues in oligosaccharides, glycoproteins, glycolipids, colominic acid and synthetic substrates.. Attaches the virus to sialic acid-containing cell receptors and thereby initiating infection. Binding of HN protein to the receptor induces a conformational change that allows the F protein to trigger virion/cell membranes fusion. Functionally, neuraminidase activity ensures the efficient spread of the virus by dissociating the mature virions from the neuraminic acid containing glycoproteins. The sequence is that of Hemagglutinin-neuraminidase (HN) from Human parainfluenza 1 virus (strain Washington/1957) (HPIV-1).